The following is a 72-amino-acid chain: MSKQSSIEQDGKILEALSNAMFRVELSNGHQVIAHISGKMRMNYIKILPGDKVRMEMSPYDLTKGRIVFRYK.

The region spanning 1–72 (MSKQSSIEQD…TKGRIVFRYK (72 aa)) is the S1-like domain.

It belongs to the IF-1 family. Component of the 30S ribosomal translation pre-initiation complex which assembles on the 30S ribosome in the order IF-2 and IF-3, IF-1 and N-formylmethionyl-tRNA(fMet); mRNA recruitment can occur at any time during PIC assembly.

It localises to the cytoplasm. One of the essential components for the initiation of protein synthesis. Stabilizes the binding of IF-2 and IF-3 on the 30S subunit to which N-formylmethionyl-tRNA(fMet) subsequently binds. Helps modulate mRNA selection, yielding the 30S pre-initiation complex (PIC). Upon addition of the 50S ribosomal subunit IF-1, IF-2 and IF-3 are released leaving the mature 70S translation initiation complex. The sequence is that of Translation initiation factor IF-1 from Cytophaga hutchinsonii (strain ATCC 33406 / DSM 1761 / CIP 103989 / NBRC 15051 / NCIMB 9469 / D465).